Reading from the N-terminus, the 346-residue chain is Uroporphyrinogen decarboxylase (346 aa).

Substrate-binding positions include 26–30 (RQAGR), phenylalanine 45, aspartate 76, tyrosine 153, serine 208, and histidine 323.

The protein belongs to the uroporphyrinogen decarboxylase family. Homodimer.

The protein resides in the cytoplasm. It carries out the reaction uroporphyrinogen III + 4 H(+) = coproporphyrinogen III + 4 CO2. It participates in porphyrin-containing compound metabolism; protoporphyrin-IX biosynthesis; coproporphyrinogen-III from 5-aminolevulinate: step 4/4. Functionally, catalyzes the decarboxylation of four acetate groups of uroporphyrinogen-III to yield coproporphyrinogen-III. This is Uroporphyrinogen decarboxylase from Prochlorococcus marinus subsp. pastoris (strain CCMP1986 / NIES-2087 / MED4).